The chain runs to 660 residues: Arginine--tRNA ligase, cytoplasmic (660 aa).

M1 carries the post-translational modification N-acetylmethionine. The tract at residues 1-72 (MDVLVSECSA…QAERNKPTKN (72 aa)) is could be involved in the assembly of the multisynthetase complex. L-arginine contacts are provided by residues 200–202 (SPN), H211, Y384, D388, and Q412. The 'HIGH' region signature appears at 201 to 212 (PNIAKEMHVGHL). An interaction with tRNA region spans residues 529 to 543 (NTAAYLLYAFTRIRS).

It belongs to the class-I aminoacyl-tRNA synthetase family. In terms of assembly, interacts (via N-terminus) with AIMP1 (via N-terminus); this stimulates its catalytic activity. Interacts (via N-terminus) with LARS2 (via C-terminus). Monomer. Part of a multisubunit complex that groups tRNA ligases for Arg (RARS1), Asp (DARS1), Gln (QARS1), Ile (IARS1), Leu (LARS1), Lys (KARS1), Met (MARS1) the bifunctional ligase for Glu and Pro (EPRS1) and the auxiliary subunits AIMP1/p43, AIMP2/p38 and EEF1E1/p18. Interacts with QARS1. Part of a complex composed of RARS1, QARS1 and AIMP1.

Its subcellular location is the cytoplasm. The protein localises to the cytosol. The enzyme catalyses tRNA(Arg) + L-arginine + ATP = L-arginyl-tRNA(Arg) + AMP + diphosphate. In terms of biological role, forms part of a macromolecular complex that catalyzes the attachment of specific amino acids to cognate tRNAs during protein synthesis. Modulates the secretion of AIMP1 and may be involved in generation of the inflammatory cytokine EMAP2 from AIMP1. This chain is Arginine--tRNA ligase, cytoplasmic, found in Homo sapiens (Human).